An 841-amino-acid chain; its full sequence is Alpha-glucuronidase A (841 aa).

Residues 1–20 (MRGSNLFQLTLALLLSLVAA) form the signal peptide. 14 N-linked (GlcNAc...) asparagine glycosylation sites follow: Asn51, Asn76, Asn149, Asn222, Asn279, Asn310, Asn343, Asn450, Asn465, Asn527, Asn576, Asn682, Asn723, and Asn732.

This sequence belongs to the glycosyl hydrolase 67 family.

The protein localises to the secreted. The catalysed reaction is an alpha-D-glucuronoside + H2O = D-glucuronate + an alcohol. Functionally, alpha-glucuronidase involved in the hydrolysis of xylan, a major structural heterogeneous polysaccharide found in plant biomass representing the second most abundant polysaccharide in the biosphere, after cellulose. Releases 4-O-methylglucuronic acid from xylan. The chain is Alpha-glucuronidase A (aguA) from Aspergillus tubingensis.